Here is a 220-residue protein sequence, read N- to C-terminus: Probable nicotinate-nucleotide adenylyltransferase (220 aa).

It belongs to the NadD family.

The catalysed reaction is nicotinate beta-D-ribonucleotide + ATP + H(+) = deamido-NAD(+) + diphosphate. The protein operates within cofactor biosynthesis; NAD(+) biosynthesis; deamido-NAD(+) from nicotinate D-ribonucleotide: step 1/1. Catalyzes the reversible adenylation of nicotinate mononucleotide (NaMN) to nicotinic acid adenine dinucleotide (NaAD). The protein is Probable nicotinate-nucleotide adenylyltransferase of Yersinia pseudotuberculosis serotype O:1b (strain IP 31758).